A 154-amino-acid polypeptide reads, in one-letter code: Myoglobin (154 aa).

Positions 2–148 (GLSDQEWQQV…FRNDMASKYK (147 aa)) constitute a Globin domain. His-65 is a binding site for nitrite. His-65 is an O2 binding site. Position 94 (His-94) interacts with heme b.

As to quaternary structure, monomeric.

The protein localises to the cytoplasm. Its subcellular location is the sarcoplasm. It catalyses the reaction Fe(III)-heme b-[protein] + nitric oxide + H2O = Fe(II)-heme b-[protein] + nitrite + 2 H(+). The enzyme catalyses H2O2 + AH2 = A + 2 H2O. Its function is as follows. Monomeric heme protein which primary function is to store oxygen and facilitate its diffusion within muscle tissues. Reversibly binds oxygen through a pentacoordinated heme iron and enables its timely and efficient release as needed during periods of heightened demand. Depending on the oxidative conditions of tissues and cells, and in addition to its ability to bind oxygen, it also has a nitrite reductase activity whereby it regulates the production of bioactive nitric oxide. Under stress conditions, like hypoxia and anoxia, it also protects cells against reactive oxygen species thanks to its pseudoperoxidase activity. This chain is Myoglobin (MB), found in Struthio camelus (Common ostrich).